The chain runs to 476 residues: Doublecortin domain-containing protein 2 (476 aa).

Doublecortin domains follow at residues 17–100 and 139–221; these read KSVL…LNYL and CTIF…LPYS. Residues 234–476 are disordered; sequence FGQKASSLPP…QQNKDYAAVA (243 aa). Polar residues predominate over residues 261 to 272; sequence STVGSSDNSSPQ. Position 270 is a phosphoserine (S270). Over residues 279–289 the composition is skewed to basic and acidic residues; sequence KKEDVNSEKLT. The segment covering 296 to 306 has biased composition (polar residues); sequence KLKNSQETIPN. Residues 354–366 are compositionally biased toward basic and acidic residues; sequence EKANKDAEQKEDF. Residues 415–426 are compositionally biased toward low complexity; the sequence is ELQQVNNELQLV. Positions 446-455 are enriched in basic and acidic residues; that stretch reads DPQRPPRPEV.

In terms of assembly, interacts with DVL1, DVL2 and DVL3. In terms of tissue distribution, ubiquitously expressed. In brain, highly expressed in the entorhinal cortex, inferior temporal cortex, medial temporal cortex, hypothalamus, amygdala and hippocampus. Expressed in liver by cholangiocytes, the epithelial cells of the bile ducts (at protein level).

It is found in the cell projection. It localises to the cilium. The protein localises to the cytoplasm. Its subcellular location is the cytoskeleton. The protein resides in the cilium axoneme. It is found in the kinocilium. Its function is as follows. Protein that plays a role in the inhibition of canonical Wnt signaling pathway. May be involved in neuronal migration during development of the cerebral neocortex. Involved in the control of ciliogenesis and ciliary length. This is Doublecortin domain-containing protein 2 (DCDC2) from Homo sapiens (Human).